A 214-amino-acid polypeptide reads, in one-letter code: Glutathione S-transferase F12 (214 aa).

Residues 2 to 82 (VVKLYGQVTA…YYATKFADQG (81 aa)) enclose the GST N-terminal domain. Glutathione is bound by residues 11–12 (AA), 40–41 (QK), 53–54 (QV), and 66–67 (ES). Residues 89 to 214 (SLEHRAIVDQ…WKKLMVLAGH (126 aa)) form the GST C-terminal domain.

The protein belongs to the GST superfamily. Phi family.

It localises to the cytoplasm. Its subcellular location is the cytosol. It catalyses the reaction RX + glutathione = an S-substituted glutathione + a halide anion + H(+). Its function is as follows. Involved in the transport and/or accumulation of both anthocyanins and proanthocyanidins (PA)s in the vacuole. Functions in the cytosol to maintain the regular accumulation in the vacuole of PA precursors, such as epicatechin and glycosylated epicatechin. The polypeptide is Glutathione S-transferase F12 (Arabidopsis thaliana (Mouse-ear cress)).